Consider the following 213-residue polypeptide: Histone H1.3 (213 aa).

S1 carries the post-translational modification N-acetylserine. Over residues 1 to 15 (SEAPAETAAPAPAEK) the composition is skewed to low complexity. The disordered stretch occupies residues 1 to 41 (SEAPAETAAPAPAEKSPAKKKKAAKKPGAGAAKRKAAGPPV). Residue K15 is modified to N6-acetyllysine. Residues K35 and K53 each carry the N6-(beta-hydroxybutyryl)lysine modification. The H15 domain occupies 37 to 110 (AGPPVSELIT…GASGSFKLDK (74 aa)). R55 bears the Citrulline mark. Residues K65, K86, and K91 each carry the N6-(beta-hydroxybutyryl)lysine modification. A disordered region spans residues 92–213 (GTLVETKGTG…AKKTAAKKKK (122 aa)). S105 is modified (phosphoserine). K107 carries the N6-(beta-hydroxybutyryl)lysine modification. Residues 107 to 119 (KLDKKAASGEAKP) show a composition bias toward basic and acidic residues. Composition is skewed to basic residues over residues 120–131 (KPKKAGAAKPKK), 138–170 (KKPKKAAGAKKAVKKTPKKAPKPKAAAKPKVAK), and 179–213 (KSPKKAKAVKPKAAKPKAPKPKAAKAKKTAAKKKK).

Belongs to the histone H1/H5 family. In terms of processing, H1 histones are progressively phosphorylated during the cell cycle, becoming maximally phosphorylated during late G2 phase and M phase, and being dephosphorylated sharply thereafter. Post-translationally, citrullination at Arg-55 (H1R54ci) by PADI4 takes place within the DNA-binding site of H1 and results in its displacement from chromatin and global chromatin decondensation, thereby promoting pluripotency and stem cell maintenance.

The protein localises to the nucleus. The protein resides in the chromosome. Histones H1 are necessary for the condensation of nucleosome chains into higher-order structures. This is Histone H1.3 from Oryctolagus cuniculus (Rabbit).